Here is a 251-residue protein sequence, read N- to C-terminus: MSEETPKSTHFGYKTVEAEQKADMVAGVFHSVAAKYDIMNDVMSFGIHRMWKRFTIESAGARPGMKVLDLAGGTGDLTAKFSHIVGEKGQVTLADINDSMLKVGREKLRDKGIVGNVNYVQANAEALPFPDNHFDIITIAFGLRNVTDKDAAIASMLRVLKPGGKLLILEFSKPKHDIMRKVYDLYSFKVMPKMGALITQDADSYEYLAESIRMHPDQETLKQMMVDAGFEQVNYTNMTDGIVALHKGYKF.

S-adenosyl-L-methionine-binding positions include Thr-74, Asp-95, and 123 to 124 (NA).

It belongs to the class I-like SAM-binding methyltransferase superfamily. MenG/UbiE family.

It carries out the reaction a 2-demethylmenaquinol + S-adenosyl-L-methionine = a menaquinol + S-adenosyl-L-homocysteine + H(+). The enzyme catalyses a 2-methoxy-6-(all-trans-polyprenyl)benzene-1,4-diol + S-adenosyl-L-methionine = a 5-methoxy-2-methyl-3-(all-trans-polyprenyl)benzene-1,4-diol + S-adenosyl-L-homocysteine + H(+). The protein operates within quinol/quinone metabolism; menaquinone biosynthesis; menaquinol from 1,4-dihydroxy-2-naphthoate: step 2/2. It participates in cofactor biosynthesis; ubiquinone biosynthesis. Functionally, methyltransferase required for the conversion of demethylmenaquinol (DMKH2) to menaquinol (MKH2) and the conversion of 2-polyprenyl-6-methoxy-1,4-benzoquinol (DDMQH2) to 2-polyprenyl-3-methyl-6-methoxy-1,4-benzoquinol (DMQH2). The chain is Ubiquinone/menaquinone biosynthesis C-methyltransferase UbiE from Shewanella piezotolerans (strain WP3 / JCM 13877).